The following is a 776-amino-acid chain: Heat shock protein 110 (776 aa).

A disordered region spans residues 741–776 (ILNKKKPAAPAPPKKEEPQPAAGDQPQSQPGEMDVD).

Belongs to the heat shock protein 70 family.

This chain is Heat shock protein 110, found in Caenorhabditis elegans.